The sequence spans 100 residues: MELTPREKDKLLIFTAALLAERRRARGLKLNYPEAVALITAAIMEGARDGRTVAELMHEGTTVLSRDDVMDGVAEMIPEIQVEATFPDGTKLVTVHHPIV.

Belongs to the urease gamma subunit family. In terms of assembly, heterotrimer of UreA (gamma), UreB (beta) and UreC (alpha) subunits. Three heterotrimers associate to form the active enzyme.

Its subcellular location is the cytoplasm. It carries out the reaction urea + 2 H2O + H(+) = hydrogencarbonate + 2 NH4(+). Its pathway is nitrogen metabolism; urea degradation; CO(2) and NH(3) from urea (urease route): step 1/1. This chain is Urease subunit gamma, found in Cupriavidus pinatubonensis (strain JMP 134 / LMG 1197) (Cupriavidus necator (strain JMP 134)).